Here is a 400-residue protein sequence, read N- to C-terminus: Acetate kinase (400 aa).

A Mg(2+)-binding site is contributed by Asn-10. An ATP-binding site is contributed by Lys-17. Substrate is bound at residue Arg-91. Catalysis depends on Asp-150, which acts as the Proton donor/acceptor. ATP is bound by residues 210–214 (HLGNG), 285–287 (DCR), and 333–337 (GIGEN). Glu-387 is a binding site for Mg(2+).

Belongs to the acetokinase family. In terms of assembly, homodimer. The cofactor is Mg(2+). It depends on Mn(2+) as a cofactor.

Its subcellular location is the cytoplasm. It catalyses the reaction acetate + ATP = acetyl phosphate + ADP. It participates in metabolic intermediate biosynthesis; acetyl-CoA biosynthesis; acetyl-CoA from acetate: step 1/2. Functionally, catalyzes the formation of acetyl phosphate from acetate and ATP. Can also catalyze the reverse reaction. The chain is Acetate kinase from Pectobacterium atrosepticum (strain SCRI 1043 / ATCC BAA-672) (Erwinia carotovora subsp. atroseptica).